A 133-amino-acid chain; its full sequence is Protein archease (133 aa).

The Ca(2+) site is built by Asp11, Asp132, and Leu133.

This sequence belongs to the archease family.

Activates the tRNA-splicing ligase complex by facilitating the enzymatic turnover of catalytic subunit RtcB. Acts by promoting the guanylylation of RtcB, a key intermediate step in tRNA ligation. Can also alter the NTP specificity of RtcB such that ATP, dGTP or ITP is used efficiently. The polypeptide is Protein archease (Thermoplasma volcanium (strain ATCC 51530 / DSM 4299 / JCM 9571 / NBRC 15438 / GSS1)).